We begin with the raw amino-acid sequence, 461 residues long: Photosystem II CP43 reaction center protein (461 aa).

Residues 1–2 constitute a propeptide that is removed on maturation; it reads ME. Thr-3 carries the N-acetylthreonine modification. Thr-3 bears the Phosphothreonine mark. A run of 5 helical transmembrane segments spans residues 57-81, 122-143, 166-188, 243-263, and 279-300; these read LFEV…PHIA, LIGP…KDKN, KAMY…RIIS, KPWG…LSYS, and WFNN…ASQA. [CaMn4O5] cluster is bound at residue Glu-355. The helical transmembrane segment at 435–459 threads the bilayer; it reads RARAAAAGFEKGIDRDTEPVLSMKP.

Belongs to the PsbB/PsbC family. PsbC subfamily. PSII is composed of 1 copy each of membrane proteins PsbA, PsbB, PsbC, PsbD, PsbE, PsbF, PsbH, PsbI, PsbJ, PsbK, PsbL, PsbM, PsbT, PsbX, PsbY, PsbZ, Psb30/Ycf12, at least 3 peripheral proteins of the oxygen-evolving complex and a large number of cofactors. It forms dimeric complexes. Requires Binds multiple chlorophylls and provides some of the ligands for the Ca-4Mn-5O cluster of the oxygen-evolving complex. It may also provide a ligand for a Cl- that is required for oxygen evolution. PSII binds additional chlorophylls, carotenoids and specific lipids. as cofactor.

It is found in the plastid. It localises to the chloroplast thylakoid membrane. Its function is as follows. One of the components of the core complex of photosystem II (PSII). It binds chlorophyll and helps catalyze the primary light-induced photochemical processes of PSII. PSII is a light-driven water:plastoquinone oxidoreductase, using light energy to abstract electrons from H(2)O, generating O(2) and a proton gradient subsequently used for ATP formation. The polypeptide is Photosystem II CP43 reaction center protein (Oltmannsiellopsis viridis (Marine flagellate)).